Consider the following 397-residue polypeptide: Ribosomal RNA large subunit methyltransferase I (397 aa).

One can recognise a PUA domain in the interval 2–82; it reads TTSIYLVKGR…EVINVDFFVK (81 aa).

This sequence belongs to the methyltransferase superfamily. RlmI family.

The protein localises to the cytoplasm. The catalysed reaction is cytidine(1962) in 23S rRNA + S-adenosyl-L-methionine = 5-methylcytidine(1962) in 23S rRNA + S-adenosyl-L-homocysteine + H(+). Functionally, specifically methylates the cytosine at position 1962 (m5C1962) of 23S rRNA. The protein is Ribosomal RNA large subunit methyltransferase I of Photobacterium profundum (strain SS9).